The sequence spans 247 residues: Transmembrane protein 69 (247 aa).

5 helical membrane-spanning segments follow: residues 97 to 117 (ALCVTLAGLIPFVAPPLVMLM), 122 to 142 (IPILAFTQMAYGASFLSFLGG), 159 to 179 (YLNLASSAAPLFFSWFAFLIS), 185 to 205 (AIVTVIMGMGVAFHLELFLLP), and 216 to 236 (IVVTLLATFSFIITLVVKSSF).

Its subcellular location is the membrane. This Homo sapiens (Human) protein is Transmembrane protein 69 (TMEM69).